We begin with the raw amino-acid sequence, 325 residues long: UPF0285 protein MA_3856 (325 aa).

It belongs to the UPF0285 family.

The protein is UPF0285 protein MA_3856 of Methanosarcina acetivorans (strain ATCC 35395 / DSM 2834 / JCM 12185 / C2A).